The primary structure comprises 375 residues: Prophage integrase IntE (375 aa).

One can recognise a Core-binding (CB) domain in the interval 82–167 (ITTSTWLDRY…VLIDVFKEAQ (86 aa)). Residues 189-375 (ITRQRLSLEE…RGKGWSKVAL (187 aa)) form the Tyr recombinase domain. Active-site residues include Arg-226, Lys-249, His-330, Arg-333, and His-353. The tract at residues 350–375 (LLGHKTQQQTDRYHDDRGKGWSKVAL) is disordered. Tyr-362 serves as the catalytic O-(3'-phospho-DNA)-tyrosine intermediate.

Belongs to the 'phage' integrase family.

Functionally, integrase from the cryptic lambdoid prophage e14. Integrase is necessary for integration of the phage into the host genome by site-specific recombination. In conjunction with excisionase, integrase is also necessary for excision of the prophage from the host genome. This chain is Prophage integrase IntE (intE), found in Escherichia coli (strain K12).